The chain runs to 302 residues: Sulfate adenylyltransferase subunit 2 (302 aa).

The segment at 280-302 is disordered; sequence RQGRAIDHDQSGSMELKKRQGYF.

The protein belongs to the PAPS reductase family. CysD subfamily. In terms of assembly, heterodimer composed of CysD, the smaller subunit, and CysN.

The catalysed reaction is sulfate + ATP + H(+) = adenosine 5'-phosphosulfate + diphosphate. It functions in the pathway sulfur metabolism; hydrogen sulfide biosynthesis; sulfite from sulfate: step 1/3. Functionally, with CysN forms the ATP sulfurylase (ATPS) that catalyzes the adenylation of sulfate producing adenosine 5'-phosphosulfate (APS) and diphosphate, the first enzymatic step in sulfur assimilation pathway. APS synthesis involves the formation of a high-energy phosphoric-sulfuric acid anhydride bond driven by GTP hydrolysis by CysN coupled to ATP hydrolysis by CysD. In Vibrio cholerae serotype O1 (strain ATCC 39541 / Classical Ogawa 395 / O395), this protein is Sulfate adenylyltransferase subunit 2.